We begin with the raw amino-acid sequence, 244 residues long: uncharacterized protein (244 aa).

This is an uncharacterized protein from Ostreid herpesvirus 1 (isolate France) (OsHV-1).